The chain runs to 483 residues: Ankyrin repeat domain-containing protein M-T5 (483 aa).

ANK repeat units lie at residues 32-63 (SRDT…DVNG), 67-101 (SRTS…DVNA), 105-137 (DGRY…SVYV), 177-210 (YGFN…DSSR), 250-279 (LDFT…DPNV), and 283-312 (LGNS…TPDA). Residues 390-478 (VSVFDTAFGL…LTDDEIHDLF (89 aa)) are PRANC/F-box-like.

As to quaternary structure, interacts (via PRANC/F-box-like domain) with the SKP1 component of the host SCF ubiquitin ligase complex. Interacts (via N-terminus) with host AKT1.

Functionally, substrate-specific adapter of SKP1-containing E3 ubiquitin-protein ligases which mediate the ubiquitination and subsequent proteasomal degradation of host target proteins including CDKN1B. Disappearance of host CDKN1B correlates with cell cycle progression through the G0/G1 checkpoint. Therefore, viruses in infected cells are protected from diverse innate host antiviral responses normally triggered by G0/G1 cell cycle arrest. In Myxoma virus (strain Lausanne) (MYXV), this protein is Ankyrin repeat domain-containing protein M-T5 (m005R).